We begin with the raw amino-acid sequence, 431 residues long: Adenylosuccinate synthetase (431 aa).

Residues 13–19 (GDEGKGK) and 41–43 (GHT) each bind GTP. Catalysis depends on D14, which acts as the Proton acceptor. Mg(2+)-binding residues include D14 and G41. IMP contacts are provided by residues 14–17 (DEGK), 39–42 (NAGH), T130, R144, Q225, T240, and R304. The Proton donor role is filled by H42. 300-306 (AVTGRPR) is a binding site for substrate. Residues R306, 332-334 (KLD), and 415-417 (STG) each bind GTP.

It belongs to the adenylosuccinate synthetase family. As to quaternary structure, homodimer. Mg(2+) is required as a cofactor.

The protein localises to the cytoplasm. The catalysed reaction is IMP + L-aspartate + GTP = N(6)-(1,2-dicarboxyethyl)-AMP + GDP + phosphate + 2 H(+). The protein operates within purine metabolism; AMP biosynthesis via de novo pathway; AMP from IMP: step 1/2. Plays an important role in the de novo pathway of purine nucleotide biosynthesis. Catalyzes the first committed step in the biosynthesis of AMP from IMP. This chain is Adenylosuccinate synthetase, found in Legionella pneumophila subsp. pneumophila (strain Philadelphia 1 / ATCC 33152 / DSM 7513).